The primary structure comprises 108 residues: MTLGQQAESLAQSYLEQQGLSFVERNVRYPFGEIDLVMRHKKYWVFVEVKYRSANQFGGAIQALSKAQIGRIRMAASHYLQSHKLDVPCRFDVVAIEDTQIQWLVDAF.

It belongs to the UPF0102 family.

The sequence is that of UPF0102 protein SO_0299 from Shewanella oneidensis (strain ATCC 700550 / JCM 31522 / CIP 106686 / LMG 19005 / NCIMB 14063 / MR-1).